Here is a 464-residue protein sequence, read N- to C-terminus: Cysteine--tRNA ligase (464 aa).

Position 30 (C30) interacts with Zn(2+). The 'HIGH' region signature appears at 32–42 (MTVYDYCHIGH). 3 residues coordinate Zn(2+): C214, H239, and E243. The 'KMSKS' region signature appears at 271 to 275 (KMSKS). ATP is bound at residue K274.

It belongs to the class-I aminoacyl-tRNA synthetase family. In terms of assembly, monomer. Zn(2+) serves as cofactor.

Its subcellular location is the cytoplasm. The catalysed reaction is tRNA(Cys) + L-cysteine + ATP = L-cysteinyl-tRNA(Cys) + AMP + diphosphate. The sequence is that of Cysteine--tRNA ligase from Janthinobacterium sp. (strain Marseille) (Minibacterium massiliensis).